The following is an 834-amino-acid chain: Periplasmic nitrate reductase (834 aa).

The tat-type signal signal peptide spans 1 to 29 (MSLTRRQFAKANAAAIAATVAGMPIASTA). A 4Fe-4S Mo/W bis-MGD-type domain is found at 41 to 97 (LKWDKAPCRFCGTGCGVMVATRENRVVATHGDVKADVNRGINCVKGYFLSKIMYGTD). Residues C48, C51, C55, and C83 each coordinate [4Fe-4S] cluster. Mo-bis(molybdopterin guanine dinucleotide) contacts are provided by residues K85, Q152, N177, C181, 214-221 (WGSNMAEM), 245-249 (STFEH), 264-266 (QTD), M375, Q379, N485, 511-512 (SD), K534, D561, and 721-730 (TGRVLEHWHT). Position 797 (F797) interacts with substrate. 2 residues coordinate Mo-bis(molybdopterin guanine dinucleotide): N805 and K822.

Belongs to the prokaryotic molybdopterin-containing oxidoreductase family. NasA/NapA/NarB subfamily. In terms of assembly, component of the periplasmic nitrate reductase NapAB complex composed of NapA and NapB. Requires [4Fe-4S] cluster as cofactor. The cofactor is Mo-bis(molybdopterin guanine dinucleotide). Post-translationally, predicted to be exported by the Tat system. The position of the signal peptide cleavage has not been experimentally proven.

The protein localises to the periplasm. It carries out the reaction 2 Fe(II)-[cytochrome] + nitrate + 2 H(+) = 2 Fe(III)-[cytochrome] + nitrite + H2O. Catalytic subunit of the periplasmic nitrate reductase complex NapAB. Receives electrons from NapB and catalyzes the reduction of nitrate to nitrite. The sequence is that of Periplasmic nitrate reductase from Stutzerimonas stutzeri (Pseudomonas stutzeri).